The sequence spans 474 residues: Carbohydrate sulfotransferase 3 (474 aa).

Residues 1–19 (MEKGLALPQDCRDLVHNLK) are Cytoplasmic-facing. Residues 20–38 (IRGRYVLFLAFVVIVFIFI) form a helical; Signal-anchor for type II membrane protein membrane-spanning segment. At 39–474 (EKENKIISRV…LEERGTFWVT (436 aa)) the chain is on the lumenal side. Asparagine 63, asparagine 74, and asparagine 96 each carry an N-linked (GlcNAc...) asparagine glycan. 137–143 (TRTGSSF) is a binding site for 3'-phosphoadenylyl sulfate. Asparagine 252 carries N-linked (GlcNAc...) asparagine glycosylation. A 3'-phosphoadenylyl sulfate-binding site is contributed by 297 to 305 (RDPRAVLAS). 2 N-linked (GlcNAc...) asparagine glycosylation sites follow: asparagine 415 and asparagine 459.

Belongs to the sulfotransferase 1 family. Gal/GlcNAc/GalNAc subfamily. N-glycosylated.

The protein resides in the golgi apparatus membrane. The catalysed reaction is chondroitin beta-D-glucuronate + n 3'-phosphoadenylyl sulfate = chondroitin 6'-sulfate + n adenosine 3',5'-bisphosphate + n H(+). The enzyme catalyses 3'-phosphoadenylyl sulfate + keratan = adenosine 3',5'-bisphosphate + keratan 6'-sulfate.. In terms of biological role, sulfotransferase that utilizes 3'-phospho-5'-adenylyl sulfate (PAPS) as sulfonate donor to catalyze the transfer of sulfate to position 6 of the N-acetylgalactosamine (GalNAc) residue of chondroitin. Chondroitin sulfate constitutes the predominant proteoglycan present in cartilage and is distributed on the surfaces of many cells and extracellular matrices. Catalyzes with a lower efficiency the sulfation of Gal residues of keratan sulfate, another glycosaminoglycan. Can also catalyze the sulfation of the Gal residues in sialyl N-acetyllactosamine (sialyl LacNAc) oligosaccharides. May play a role in the maintenance of naive T-lymphocytes in the spleen. The chain is Carbohydrate sulfotransferase 3 (Chst3) from Rattus norvegicus (Rat).